Consider the following 885-residue polypeptide: Alanine--tRNA ligase (885 aa).

The Zn(2+) site is built by histidine 574, histidine 578, cysteine 685, and histidine 689.

This sequence belongs to the class-II aminoacyl-tRNA synthetase family. Zn(2+) is required as a cofactor.

It is found in the cytoplasm. It carries out the reaction tRNA(Ala) + L-alanine + ATP = L-alanyl-tRNA(Ala) + AMP + diphosphate. Its function is as follows. Catalyzes the attachment of alanine to tRNA(Ala) in a two-step reaction: alanine is first activated by ATP to form Ala-AMP and then transferred to the acceptor end of tRNA(Ala). Also edits incorrectly charged Ser-tRNA(Ala) and Gly-tRNA(Ala) via its editing domain. The protein is Alanine--tRNA ligase of Deinococcus geothermalis (strain DSM 11300 / CIP 105573 / AG-3a).